A 380-amino-acid polypeptide reads, in one-letter code: tRNA-specific 2-thiouridylase MnmA (380 aa).

Residues 26-33 and Leu-52 each bind ATP; that span reads AMSGGVDS. Residue Cys-120 is the Nucleophile of the active site. Cysteines 120 and 217 form a disulfide. ATP is bound at residue Gly-144. The segment at 166-168 is interaction with tRNA; it reads RDQ. Cys-217 functions as the Cysteine persulfide intermediate in the catalytic mechanism.

This sequence belongs to the MnmA/TRMU family.

It is found in the cytoplasm. It catalyses the reaction S-sulfanyl-L-cysteinyl-[protein] + uridine(34) in tRNA + AH2 + ATP = 2-thiouridine(34) in tRNA + L-cysteinyl-[protein] + A + AMP + diphosphate + H(+). Its function is as follows. Catalyzes the 2-thiolation of uridine at the wobble position (U34) of tRNA, leading to the formation of s(2)U34. The sequence is that of tRNA-specific 2-thiouridylase MnmA from Roseobacter denitrificans (strain ATCC 33942 / OCh 114) (Erythrobacter sp. (strain OCh 114)).